Here is a 432-residue protein sequence, read N- to C-terminus: GTPase Obg (432 aa).

In terms of domain architecture, Obg spans 1 to 159; sequence MKFIDTAKFT…YEVKAELKVL (159 aa). One can recognise an OBG-type G domain in the interval 160-332; it reads ADVGFVGLPN…LLLKIAKELE (173 aa). Residues 166-173, 191-195, 213-216, 284-287, and 313-315 each bind GTP; these read GLPNAGKS, FTTLN, DLPG, NKMD, and SGL. The Mg(2+) site is built by Ser173 and Thr193. Residues 354–432 form the OCT domain; it reads RLEEDEEDIQ…VFEYELEWMD (79 aa).

Belongs to the TRAFAC class OBG-HflX-like GTPase superfamily. OBG GTPase family. Monomer. Requires Mg(2+) as cofactor.

Its subcellular location is the cytoplasm. Functionally, an essential GTPase which binds GTP, GDP and possibly (p)ppGpp with moderate affinity, with high nucleotide exchange rates and a fairly low GTP hydrolysis rate. Plays a role in control of the cell cycle, stress response, ribosome biogenesis and in those bacteria that undergo differentiation, in morphogenesis control. This chain is GTPase Obg, found in Mesoplasma florum (strain ATCC 33453 / NBRC 100688 / NCTC 11704 / L1) (Acholeplasma florum).